The sequence spans 394 residues: 8-amino-7-oxononanoate synthase (394 aa).

R21 is a substrate binding site. 112-113 is a binding site for pyridoxal 5'-phosphate; it reads GY. Position 137 (H137) interacts with substrate. Positions 183, 211, and 239 each coordinate pyridoxal 5'-phosphate. At K242 the chain carries N6-(pyridoxal phosphate)lysine. T358 lines the substrate pocket.

This sequence belongs to the class-II pyridoxal-phosphate-dependent aminotransferase family. BioF subfamily. In terms of assembly, homodimer. Pyridoxal 5'-phosphate is required as a cofactor.

The enzyme catalyses 6-carboxyhexanoyl-[ACP] + L-alanine + H(+) = (8S)-8-amino-7-oxononanoate + holo-[ACP] + CO2. It functions in the pathway cofactor biosynthesis; biotin biosynthesis. Functionally, catalyzes the decarboxylative condensation of pimeloyl-[acyl-carrier protein] and L-alanine to produce 8-amino-7-oxononanoate (AON), [acyl-carrier protein], and carbon dioxide. The protein is 8-amino-7-oxononanoate synthase of Paraburkholderia phymatum (strain DSM 17167 / CIP 108236 / LMG 21445 / STM815) (Burkholderia phymatum).